The sequence spans 839 residues: Taste receptor type 1 member 2 (839 aa).

A signal peptide spans 1–19 (MRPRATTICSLFFLLRVLA). At 20 to 566 (EPAKNSDFYL…AFLEWHEAPT (547 aa)) the chain is on the extracellular side. Asparagine 84, asparagine 127, asparagine 248, asparagine 292, asparagine 312, asparagine 368, asparagine 428, asparagine 487, and asparagine 527 each carry an N-linked (GlcNAc...) asparagine glycan. The chain crosses the membrane as a helical span at residues 567–587 (IVVALLAALGFLSTLAILVIF). Over 588-602 (WRHFQTPMVRSAGGP) the chain is Cytoplasmic. Residues 603-623 (MCFLMLTLLLVAYMVVPVYVG) traverse the membrane as a helical segment. The Extracellular segment spans residues 624–635 (PPKVSTCFCRQA). A helical transmembrane segment spans residues 636 to 656 (LFPLCFTICISCIAVRSFQIV). Residues 657 to 681 (CVFKMASRFPRAYSYWVRYQGPYVS) are Cytoplasmic-facing. A helical membrane pass occupies residues 682–702 (MAFITVLKMVTVVIGMLATGL). The Extracellular portion of the chain corresponds to 703-727 (NPTTRIDPDDPKIMIVSCNPNYRNS). Residues 728–748 (LFFNTGLDLLLSVVGFSFAYM) traverse the membrane as a helical segment. The Cytoplasmic segment spans residues 749–760 (GKELPTNYNEAK). The helical transmembrane segment at 761–781 (FITLSMTFYFTSSVSLCTFMS) threads the bilayer. The Extracellular portion of the chain corresponds to 782-784 (AYN). The helical transmembrane segment at 785-805 (GVLVTIMDLLVTVLNLLAISL) threads the bilayer. At 806–839 (GYFGPKCYMILFYPERNTPAYFNSMIQGYTMRRD) the chain is on the cytoplasmic side.

This sequence belongs to the G-protein coupled receptor 3 family. TAS1R subfamily. As to quaternary structure, forms heterodimers with TAS1R3.

Its subcellular location is the cell membrane. Its function is as follows. Putative taste receptor. TAS1R2/TAS1R3 recognizes diverse natural and synthetic sweeteners. This Macaca mulatta (Rhesus macaque) protein is Taste receptor type 1 member 2 (TAS1R2).